Reading from the N-terminus, the 398-residue chain is Spermatogenesis associated 6-like protein (398 aa).

A disordered region spans residues 170 to 215 (KLNGPANNRKKKPKEKNSDQLSKGTPFWGPSPQRLHLHRPTQRNPG). 2 positions are modified to phosphoserine: Ser269 and Ser272.

This sequence belongs to the SPATA6 family.

The sequence is that of Spermatogenesis associated 6-like protein (Spata6l) from Rattus norvegicus (Rat).